Here is a 327-residue protein sequence, read N- to C-terminus: Phosphate acyltransferase (327 aa).

This sequence belongs to the PlsX family. Homodimer. Probably interacts with PlsY.

Its subcellular location is the cytoplasm. It carries out the reaction a fatty acyl-[ACP] + phosphate = an acyl phosphate + holo-[ACP]. Its pathway is lipid metabolism; phospholipid metabolism. Its function is as follows. Catalyzes the reversible formation of acyl-phosphate (acyl-PO(4)) from acyl-[acyl-carrier-protein] (acyl-ACP). This enzyme utilizes acyl-ACP as fatty acyl donor, but not acyl-CoA. The sequence is that of Phosphate acyltransferase from Thermotoga maritima (strain ATCC 43589 / DSM 3109 / JCM 10099 / NBRC 100826 / MSB8).